The primary structure comprises 615 residues: Dihydroxy-acid dehydratase (615 aa).

Asp-81 is a binding site for Mg(2+). Cys-122 contributes to the [2Fe-2S] cluster binding site. Residues Asp-123 and Lys-124 each coordinate Mg(2+). Lys-124 carries the N6-carboxylysine modification. Cys-197 is a [2Fe-2S] cluster binding site. Glu-494 lines the Mg(2+) pocket. Residue Ser-520 is the Proton acceptor of the active site.

Belongs to the IlvD/Edd family. In terms of assembly, homodimer. The cofactor is [2Fe-2S] cluster. Mg(2+) serves as cofactor.

The catalysed reaction is (2R)-2,3-dihydroxy-3-methylbutanoate = 3-methyl-2-oxobutanoate + H2O. It catalyses the reaction (2R,3R)-2,3-dihydroxy-3-methylpentanoate = (S)-3-methyl-2-oxopentanoate + H2O. It participates in amino-acid biosynthesis; L-isoleucine biosynthesis; L-isoleucine from 2-oxobutanoate: step 3/4. Its pathway is amino-acid biosynthesis; L-valine biosynthesis; L-valine from pyruvate: step 3/4. In terms of biological role, functions in the biosynthesis of branched-chain amino acids. Catalyzes the dehydration of (2R,3R)-2,3-dihydroxy-3-methylpentanoate (2,3-dihydroxy-3-methylvalerate) into 2-oxo-3-methylpentanoate (2-oxo-3-methylvalerate) and of (2R)-2,3-dihydroxy-3-methylbutanoate (2,3-dihydroxyisovalerate) into 2-oxo-3-methylbutanoate (2-oxoisovalerate), the penultimate precursor to L-isoleucine and L-valine, respectively. The sequence is that of Dihydroxy-acid dehydratase from Salinispora arenicola (strain CNS-205).